A 380-amino-acid chain; its full sequence is Zinc finger protein neuro-d4 (380 aa).

The segment at 132-164 (ALLDCQKPPPGDFAHDAEGDEMEDDAPRRKNKA) is disordered. The C2H2-type zinc-finger motif lies at 190–213 (YVCDICGKRYKNRPGLSYHYTHTH). 2 consecutive PHD-type zinc fingers follow at residues 262–321 (EGPC…CKNC) and 318–368 (CKNC…CLRQ). Zn(2+) is bound by residues Cys265, Cys268, Cys286, Cys289, His294, Cys297, Cys315, Cys318, Cys321, Cys324, Cys336, Cys339, His344, Cys347, Cys362, and Cys365.

It belongs to the requiem/DPF family. In terms of assembly, component of neuron-specific chromatin remodeling complex (nBAF complex), a subfamily of ATP-dependent SWI/SNF chromatin remodeling complexes.

Its subcellular location is the cytoplasm. The protein localises to the nucleus. May have an important role in developing neurons by participating in regulation of cell survival, possibly as a neurospecific transcription factor. Belongs to the neuron-specific chromatin remodeling complex (nBAF complex) and plays a role in neural development. In Gallus gallus (Chicken), this protein is Zinc finger protein neuro-d4.